The following is a 217-amino-acid chain: Orotidine 5'-phosphate decarboxylase (217 aa).

Residues Asp-14, Lys-36, 64 to 73 (DFKVADIPST), Ser-120, 172 to 182 (PGVGAQGGNLS), Gly-197, and Arg-198 each bind substrate. Lys-66 (proton donor) is an active-site residue.

It belongs to the OMP decarboxylase family. Type 1 subfamily. Homodimer.

The catalysed reaction is orotidine 5'-phosphate + H(+) = UMP + CO2. It participates in pyrimidine metabolism; UMP biosynthesis via de novo pathway; UMP from orotate: step 2/2. In terms of biological role, catalyzes the decarboxylation of orotidine 5'-monophosphate (OMP) to uridine 5'-monophosphate (UMP). The chain is Orotidine 5'-phosphate decarboxylase from Methanococcus maripaludis (strain DSM 14266 / JCM 13030 / NBRC 101832 / S2 / LL).